A 458-amino-acid polypeptide reads, in one-letter code: Protein amnionless (458 aa).

An N-terminal signal peptide occupies residues 1-19 (MGALGRALLWLQLCALARA). At 20–366 (AYKLWVPTTD…LGSGSRAGLA (347 aa)) the chain is on the extracellular side. N-linked (GlcNAc...) asparagine glycosylation is present at Asn-35. 6 cysteine pairs are disulfide-bonded: Cys-43–Cys-96, Cys-137–Cys-213, Cys-205–Cys-211, Cys-223–Cys-249, Cys-234–Cys-250, and Cys-239–Cys-253. The interaction with CUBN stretch occupies residues 67-87 (SDMLLPRDGEFVLASGAGFGA). The 52-residue stretch at 203–254 (GACADPSGCVCGDAEVQPWICAALLQPLGGRCPPAACPDALRPEGQCCDLCG) folds into the VWFC domain. The chain crosses the membrane as a helical span at residues 367–387 (GGVAAGLLLLLLALAAGLLLL). Over 388–458 (RRAPRLRWTK…VNPLFAEAEA (71 aa)) the chain is Cytoplasmic. Residues 422 to 446 (SVGPVPRTPQPPPAQQAGSSSTSRS) are disordered.

Interacts (via extracellular region) with CUBN/cubilin. This gives rise to a huge complex containing one AMN chain and three CUBN chains. In terms of processing, N-glycosylated. A soluble form arises by proteolytic removal of the membrane anchor. As to expression, detected in kidney (at protein level). Detected in kidney and ileum.

The protein localises to the apical cell membrane. The protein resides in the cell membrane. It localises to the endosome membrane. It is found in the membrane. Its subcellular location is the coated pit. The protein localises to the secreted. Membrane-bound component of the endocytic receptor formed by AMN and CUBN. Required for normal CUBN glycosylation and trafficking to the cell surface. The complex formed by AMN and CUBN is required for efficient absorption of vitamin B12. Required for normal CUBN-mediated protein transport in the kidney. This is Protein amnionless (AMN) from Canis lupus familiaris (Dog).